The chain runs to 421 residues: Cytochrome c biogenesis protein Ccs1 (421 aa).

3 consecutive transmembrane segments (helical) span residues 12 to 32, 71 to 91, and 157 to 177; these read LRFA…GTVI, TWWF…CTIL, and IAPI…IFGA.

Belongs to the Ccs1/CcsB family. May interact with CcsA.

It is found in the plastid. The protein localises to the chloroplast thylakoid membrane. In terms of biological role, required during biogenesis of c-type cytochromes (cytochrome c6 and cytochrome f) at the step of heme attachment. The sequence is that of Cytochrome c biogenesis protein Ccs1 from Trieres chinensis (Marine centric diatom).